A 173-amino-acid polypeptide reads, in one-letter code: Large ribosomal subunit protein uL10 (173 aa).

This sequence belongs to the universal ribosomal protein uL10 family. In terms of assembly, part of the ribosomal stalk of the 50S ribosomal subunit. The N-terminus interacts with L11 and the large rRNA to form the base of the stalk. The C-terminus forms an elongated spine to which L12 dimers bind in a sequential fashion forming a multimeric L10(L12)X complex.

In terms of biological role, forms part of the ribosomal stalk, playing a central role in the interaction of the ribosome with GTP-bound translation factors. This Chlorobaculum parvum (strain DSM 263 / NCIMB 8327) (Chlorobium vibrioforme subsp. thiosulfatophilum) protein is Large ribosomal subunit protein uL10.